The chain runs to 232 residues: MAKTLSRSTASCVAKRFFSTSNAVASPSPLPSHLISRRFSPTIFHAVGYIPALTRFTTIRTRMDRSGGSYSPLKSGSNFSDRPPTEMAPLFPGCDYEHWLIVMEKPGGENAQKQQMIDCYVQTLAKIVGSEEEARKKIYNVSCERYFGFGCEIDEETSNKLEGLPGVLFVLPDSYVDPEFKDYGAELFVNGEVVPRPPERQRRMVELTNQRGSDKPKYHDRIRNVRRRENMR.

A mitochondrion-targeting transit peptide spans 1–67; the sequence is MAKTLSRSTA…TIRTRMDRSG (67 aa). The tract at residues 208–232 is disordered; the sequence is TNQRGSDKPKYHDRIRNVRRRENMR. The segment covering 212–232 has biased composition (basic and acidic residues); sequence GSDKPKYHDRIRNVRRRENMR.

Belongs to the MORF family. In terms of assembly, heterodimers with MORF8/RIP1, MORF3/RIP3, MORF6/RIP6, MORF7/RIP7 and MORF9/RIP9.

It localises to the mitochondrion. Functionally, involved in organellar RNA editing. Required for the processing of few RNA editing sites in mitochondria. The sequence is that of Multiple organellar RNA editing factor 6, mitochondrial from Arabidopsis thaliana (Mouse-ear cress).